A 133-amino-acid chain; its full sequence is p53 and DNA damage-regulated protein 1 (133 aa).

Belongs to the prefoldin subunit beta family. Component of the PAQosome complex which is responsible for the biogenesis of several protein complexes and which consists of R2TP complex members RUVBL1, RUVBL2, RPAP3 and PIH1D1, URI complex members PFDN2, PFDN6, PDRG1, UXT and URI1 as well as ASDURF, POLR2E and DNAAF10/WDR92.

The protein resides in the cytoplasm. In terms of biological role, may play a role in chaperone-mediated protein folding. This Mus musculus (Mouse) protein is p53 and DNA damage-regulated protein 1 (Pdrg1).